The chain runs to 139 residues: Large-conductance mechanosensitive channel (139 aa).

The next 3 helical transmembrane spans lie at Phe10–Gly30, Val40–Ala60, and Leu80–Phe100.

This sequence belongs to the MscL family. As to quaternary structure, homopentamer.

Its subcellular location is the cell inner membrane. Its function is as follows. Channel that opens in response to stretch forces in the membrane lipid bilayer. May participate in the regulation of osmotic pressure changes within the cell. The sequence is that of Large-conductance mechanosensitive channel from Janthinobacterium sp. (strain Marseille) (Minibacterium massiliensis).